Reading from the N-terminus, the 774-residue chain is Ras and Rab interactor 1 (774 aa).

Position 1 is an N-acetylmethionine (Met1). Residues 1–52 (MEDPGETEAHPLGATSLNFVPGYQQEEKPSPDPLYDTPDARGVQAGGSQQPA) are disordered. Ser16 carries the phosphoserine modification. Residue Tyr35 is modified to Phosphotyrosine; by ABL1 and ABL2. In terms of domain architecture, SH2 spans 68-162 (WLQLRANAAA…ILLLPLPLPR (95 aa)). 2 disordered regions span residues 188 to 211 (LNTKNQQRPSEAPQIPRLKARSPQ) and 249 to 342 (STET…RPRH). Residues Ser209, Ser257, Ser330, and Ser334 each carry the phosphoserine modification. A compositionally biased stretch (pro residues) spans 256-268 (LSPPAVPPPPVPV). The segment covering 327 to 337 (SSGSPTTSPRL) has biased composition (low complexity). Ser351 bears the Phosphoserine; by PKD/PRKD1 mark. The VPS9 domain occupies 456–598 (LSTDGSLGRL…LSGLSQAHAL (143 aa)). At Ser609 the chain carries Phosphoserine. The Ras-associating domain maps to 624-706 (FQHLLRVAYQ…GYLIYRRAER (83 aa)). Omega-N-methylarginine is present on Arg692. Basic and acidic residues predominate over residues 704-766 (AERPETQRAA…GHMQLEEQKA (63 aa)). Residues 704–774 (AERPETQRAA…KAEGCPALEE (71 aa)) form a disordered region.

This sequence belongs to the RIN (Ras interaction/interference) family. In terms of assembly, interacts with the GTP-bound form of Ras proteins (NRAS, HRAS and KRAS). This interaction prevents the association between RAF1 and Ras. Interacts with 14-3-3 proteins YWHAB, YWHAE and YWHAZ when phosphorylated on Ser-351. Interacts with the SH3 domain of ABL1 and ABL2. Interacts with RAB5A. The interaction with Ras is probably regulated and antagonized by the interaction with 14-3-3 proteins. The interaction with 14-3-3 proteins is regulated by phosphorylation on Ser-351. In terms of processing, phosphorylated on tyrosine residues by ABL1 and ABL2. Phosphorylation at Ser-351 by PRKD1 induces interaction with 14-3-3 proteins.

Its subcellular location is the cytoplasm. It localises to the membrane. The protein resides in the cytoskeleton. In terms of biological role, ras effector protein, which may serve as an inhibitory modulator of neuronal plasticity in aversive memory formation. Can affect Ras signaling at different levels. First, by competing with RAF1 protein for binding to activated Ras. Second, by enhancing signaling from ABL1 and ABL2, which regulate cytoskeletal remodeling. Third, by activating RAB5A, possibly by functioning as a guanine nucleotide exchange factor (GEF) for RAB5A, by exchanging bound GDP for free GTP, and facilitating Ras-activated receptor endocytosis. This Rattus norvegicus (Rat) protein is Ras and Rab interactor 1 (Rin1).